Reading from the N-terminus, the 185-residue chain is Ribosome-recycling factor (185 aa).

Belongs to the RRF family.

It is found in the cytoplasm. Responsible for the release of ribosomes from messenger RNA at the termination of protein biosynthesis. May increase the efficiency of translation by recycling ribosomes from one round of translation to another. The protein is Ribosome-recycling factor of Parafrankia sp. (strain EAN1pec).